The chain runs to 239 residues: 1-(5-phosphoribosyl)-5-[(5-phosphoribosylamino)methylideneamino] imidazole-4-carboxamide isomerase (239 aa).

Catalysis depends on Asp8, which acts as the Proton acceptor. The active-site Proton donor is Asp129.

Belongs to the HisA/HisF family.

It localises to the cytoplasm. The catalysed reaction is 1-(5-phospho-beta-D-ribosyl)-5-[(5-phospho-beta-D-ribosylamino)methylideneamino]imidazole-4-carboxamide = 5-[(5-phospho-1-deoxy-D-ribulos-1-ylimino)methylamino]-1-(5-phospho-beta-D-ribosyl)imidazole-4-carboxamide. It functions in the pathway amino-acid biosynthesis; L-histidine biosynthesis; L-histidine from 5-phospho-alpha-D-ribose 1-diphosphate: step 4/9. The polypeptide is 1-(5-phosphoribosyl)-5-[(5-phosphoribosylamino)methylideneamino] imidazole-4-carboxamide isomerase (Bacillus thuringiensis (strain Al Hakam)).